Here is a 212-residue protein sequence, read N- to C-terminus: Large ribosomal subunit protein uL3 (212 aa).

The interval 133-152 (RGSMGHGSKYHRRPGSLGAK) is disordered.

It belongs to the universal ribosomal protein uL3 family. As to quaternary structure, part of the 50S ribosomal subunit. Forms a cluster with proteins L14 and L19.

Its function is as follows. One of the primary rRNA binding proteins, it binds directly near the 3'-end of the 23S rRNA, where it nucleates assembly of the 50S subunit. In Syntrophomonas wolfei subsp. wolfei (strain DSM 2245B / Goettingen), this protein is Large ribosomal subunit protein uL3.